The following is a 1519-amino-acid chain: DNA (cytosine-5)-methyltransferase 4 (1519 aa).

Over residues 1–24 (MEMETKAGKQKKRSVDSDDDVSKE) the composition is skewed to basic and acidic residues. A disordered region spans residues 1–31 (MEMETKAGKQKKRSVDSDDDVSKERRPKRAA). Residue Lys583 forms a Glycyl lysine isopeptide (Lys-Gly) (interchain with G-Cter in ubiquitin) linkage. The segment at 641 to 668 (ENVEEEELEEVEEEDENEEDDPEENELE) is disordered. Over residues 642–668 (NVEEEELEEVEEEDENEEDDPEENELE) the composition is skewed to acidic residues. 2 consecutive BAH domains span residues 715–849 (DVVV…FSLP) and 916–1033 (TTLK…KQFP). The SAM-dependent MTase C5-type domain maps to 1078-1512 (LATLDIFAGC…RKLKEALYLK (435 aa)). Cys1183 is a catalytic residue.

It belongs to the class I-like SAM-binding methyltransferase superfamily. C5-methyltransferase family. In terms of tissue distribution, expressed at low levels in vegetative and floral organs.

The protein localises to the nucleus. It carries out the reaction a 2'-deoxycytidine in DNA + S-adenosyl-L-methionine = a 5-methyl-2'-deoxycytidine in DNA + S-adenosyl-L-homocysteine + H(+). Functionally, maintains chromatin CpG methylation that plays a role in genomic imprinting, regulation of embryogenesis and seed viability. Required for proper patterns of CG DNA methylation in dividing cells. This Arabidopsis thaliana (Mouse-ear cress) protein is DNA (cytosine-5)-methyltransferase 4 (MET4).